Consider the following 164-residue polypeptide: CASP-like protein 1C2 (164 aa).

Topologically, residues 1–8 are cytoplasmic; sequence MVKLTQRL. A helical transmembrane segment spans residues 9–29; it reads GGLVLRFAAFCAALGAVIAMI. The Extracellular portion of the chain corresponds to 30 to 51; sequence TSRERSSFFVISLVAKYSDLAA. A helical membrane pass occupies residues 52-72; the sequence is FKYFVIANAIVTVYSFLVLFL. Residues 73 to 80 lie on the Cytoplasmic side of the membrane; the sequence is PKESLLWK. The helical transmembrane segment at 81–101 threads the bilayer; the sequence is FVVVLDLMVTMLLTSSLSAAV. At 102–129 the chain is on the extracellular side; sequence AVAQVGKRGNANAGWLPICGQVPRFCDQ. Residues 130 to 150 traverse the membrane as a helical segment; that stretch reads ITGALIAGLVALVLYVFLLIF. At 151–164 the chain is on the cytoplasmic side; sequence SIHHVVDPFLLRKS.

It belongs to the Casparian strip membrane proteins (CASP) family. In terms of assembly, homodimer and heterodimers.

The protein localises to the cell membrane. The chain is CASP-like protein 1C2 from Arabidopsis thaliana (Mouse-ear cress).